The following is a 536-amino-acid chain: Ecdysone receptor (536 aa).

A modulating region spans residues 1–114 (MKTENLIVTT…GPVPRQQEEL (114 aa)). The disordered stretch occupies residues 77 to 107 (SPNSKLDDGNMSVHMGDGLDGKKSSSKKGPV). 2 NR C4-type zinc fingers span residues 115-135 (CLVC…CEGC) and 151-175 (CKFG…LKKC). The segment at residues 115 to 187 (CLVCGDRASG…VGMRPECVVP (73 aa)) is a DNA-binding region (nuclear receptor). The region spanning 278-514 (NQVAVIYKLI…FLEEVWDVGD (237 aa)) is the NR LBD domain.

The protein belongs to the nuclear hormone receptor family. NR1 subfamily.

It is found in the nucleus. In terms of biological role, receptor for ecdysone. Binds to ecdysone response elements (ECRES). The protein is Ecdysone receptor (EcR) of Chironomus tentans (Midge).